Consider the following 473-residue polypeptide: Photosystem II CP43 reaction center protein (473 aa).

Residues 1–14 (MKTLYSLRRFYPVE) constitute a propeptide that is removed on maturation. Threonine 15 is modified (N-acetylthreonine). A Phosphothreonine modification is found at threonine 15. The next 5 membrane-spanning stretches (helical) occupy residues 69–93 (LFEV…PHLA), 134–155 (LLGP…KDRN), 178–200 (KALY…RKIT), 255–275 (KPFA…LSYS), and 291–312 (WFNN…ASQA). Glutamate 367 provides a ligand contact to [CaMn4O5] cluster. A helical transmembrane segment spans residues 447 to 471 (RARAAAAGFEKGIDRDFEPVLSMTP).

This sequence belongs to the PsbB/PsbC family. PsbC subfamily. In terms of assembly, PSII is composed of 1 copy each of membrane proteins PsbA, PsbB, PsbC, PsbD, PsbE, PsbF, PsbH, PsbI, PsbJ, PsbK, PsbL, PsbM, PsbT, PsbX, PsbY, PsbZ, Psb30/Ycf12, at least 3 peripheral proteins of the oxygen-evolving complex and a large number of cofactors. It forms dimeric complexes. The cofactor is Binds multiple chlorophylls and provides some of the ligands for the Ca-4Mn-5O cluster of the oxygen-evolving complex. It may also provide a ligand for a Cl- that is required for oxygen evolution. PSII binds additional chlorophylls, carotenoids and specific lipids..

It localises to the plastid. The protein localises to the chloroplast thylakoid membrane. In terms of biological role, one of the components of the core complex of photosystem II (PSII). It binds chlorophyll and helps catalyze the primary light-induced photochemical processes of PSII. PSII is a light-driven water:plastoquinone oxidoreductase, using light energy to abstract electrons from H(2)O, generating O(2) and a proton gradient subsequently used for ATP formation. In Eucalyptus globulus subsp. globulus (Tasmanian blue gum), this protein is Photosystem II CP43 reaction center protein.